The chain runs to 364 residues: Phosphoserine aminotransferase (364 aa).

Residue R46 participates in L-glutamate binding. Residues 80–81, W106, T157, D176, and Q199 each bind pyridoxal 5'-phosphate; that span reads AR. Residue K200 is modified to N6-(pyridoxal phosphate)lysine. 241 to 242 serves as a coordination point for pyridoxal 5'-phosphate; that stretch reads NT.

Belongs to the class-V pyridoxal-phosphate-dependent aminotransferase family. SerC subfamily. Homodimer. Pyridoxal 5'-phosphate serves as cofactor.

Its subcellular location is the cytoplasm. It carries out the reaction O-phospho-L-serine + 2-oxoglutarate = 3-phosphooxypyruvate + L-glutamate. The enzyme catalyses 4-(phosphooxy)-L-threonine + 2-oxoglutarate = (R)-3-hydroxy-2-oxo-4-phosphooxybutanoate + L-glutamate. The protein operates within amino-acid biosynthesis; L-serine biosynthesis; L-serine from 3-phospho-D-glycerate: step 2/3. It participates in cofactor biosynthesis; pyridoxine 5'-phosphate biosynthesis; pyridoxine 5'-phosphate from D-erythrose 4-phosphate: step 3/5. In terms of biological role, catalyzes the reversible conversion of 3-phosphohydroxypyruvate to phosphoserine and of 3-hydroxy-2-oxo-4-phosphonooxybutanoate to phosphohydroxythreonine. The chain is Phosphoserine aminotransferase from Vibrio cholerae serotype O1 (strain ATCC 39315 / El Tor Inaba N16961).